Here is a 1097-residue protein sequence, read N- to C-terminus: Kinesin-like protein KIF1C (1097 aa).

One can recognise a Kinesin motor domain in the interval 5-347; the sequence is SVKVAVRVRP…LRYADRTKQI (343 aa). 96-103 provides a ligand contact to ATP; the sequence is GQTGAGKS. Ser294 carries the post-translational modification Phosphoserine. A coiled-coil region spans residues 358-380; it reads NARLIRELQEEVARLRELLMAQG. A disordered region spans residues 397–434; the sequence is GGVLPAASSPPAPASPSSPPPHNGELEPSFSPSAEPQI. Positions 404–418 are enriched in pro residues; it reads SSPPAPASPSSPPPH. A coiled-coil region spans residues 437 to 478; sequence EEAMERLQETEKIIAELNETWEEKLRKTEALRMEREALLAEM. Phosphoserine is present on Ser491. In terms of domain architecture, FHA spans 520–587; it reads TRVGQVDVDI…LKSGNRIVMG (68 aa). The stretch at 630–671 forms a coiled coil; it reads EQQGIDIKLEMEKRLQDLENQYRKEKEEADLLLEQQRLYADS. Phosphoserine is present on residues Ser671 and Ser673. Residues 824–868 adopt a coiled-coil conformation; that stretch reads AEVEDLRAHIDKLTGILQEVKLQNSSKDRELQALRDRMLRMERVI. Disordered stretches follow at residues 897-921 and 946-1097; these read EAVSNDHSPAVRPSSPPQSSWERVS and QGLQ…GAAV. At Ser911 the chain carries Phosphoserine. Residues 949-958 are compositionally biased toward gly residues; sequence QGSGGRGGGL. Residues 997–1015 are compositionally biased toward pro residues; the sequence is GPQPPEEVTAPPPPPNRRP. The segment covering 1016-1026 has biased composition (basic residues); that stretch reads PSPRRPHRPRR. The residue at position 1028 (Ser1028) is a Phosphoserine. Position 1036 is an omega-N-methylarginine (Arg1036). Residues 1059–1077 are compositionally biased toward pro residues; it reads QPQPYPAQRPGPRYPPYTT. Phosphothreonine is present on Thr1077. Residue Ser1086 is modified to Phosphoserine. A compositionally biased stretch (basic and acidic residues) spans 1086–1097; the sequence is SAPDLKESGAAV.

It belongs to the TRAFAC class myosin-kinesin ATPase superfamily. Kinesin family. Unc-104 subfamily.

The protein resides in the cytoplasm. It is found in the cytoskeleton. Functionally, probable motor protein. The chain is Kinesin-like protein KIF1C (Kif1c) from Rattus norvegicus (Rat).